We begin with the raw amino-acid sequence, 668 residues long: Fructose-1,6-bisphosphatase class 3 (668 aa).

Belongs to the FBPase class 3 family. Mn(2+) serves as cofactor.

The enzyme catalyses beta-D-fructose 1,6-bisphosphate + H2O = beta-D-fructose 6-phosphate + phosphate. It functions in the pathway carbohydrate biosynthesis; gluconeogenesis. This chain is Fructose-1,6-bisphosphatase class 3, found in Clostridium botulinum (strain Kyoto / Type A2).